A 1708-amino-acid chain; its full sequence is Rapamycin-insensitive companion of mTOR (1708 aa).

An interaction with NBN region spans residues 1–789 (MAAIGRGRSL…DKANLHALIQ (789 aa)). Residues S21, S35, and S265 each carry the phosphoserine modification. Residue K274 forms a Glycyl lysine isopeptide (Lys-Gly) (interchain with G-Cter in ubiquitin) linkage. Positions 521-570 (LKDTEEALLINLRDSQVLQHKENLEWNWNLIGTILKWPNVNLRNYKDEQL) are ribosome-binding domain. ATP contacts are provided by N543, R572, and R576. The segment at 1022-1041 (LSLNSESTSSRHNSESESVP) is disordered. 2 positions are modified to N6-acetyllysine: K1092 and K1095. A Phosphothreonine modification is found at T1103. Positions 1103 to 1134 (TLPNKKHRSSSDPKGGKLSSESKTSNRRIRTL) are disordered. N6-acetyllysine occurs at positions 1116, 1119, and 1125. T1135 is modified (phosphothreonine; by RPS6KB1). Residues S1138, S1162, and S1219 each carry the phosphoserine modification. The tract at residues 1204–1252 (VVESSTSSHMKIRSQSFNTDTTTSGISSMSSSPSRETVGVDATTMDTDC) is disordered. Residues 1206 to 1221 (ESSTSSHMKIRSQSFN) show a composition bias toward polar residues. A compositionally biased stretch (low complexity) spans 1222–1240 (TDTTTSGISSMSSSPSRET). The residue at position 1235 (S1235) is a Phosphoserine; by GSK3-beta. A Phosphothreonine modification is found at T1271. 4 positions are modified to phosphoserine: S1274, S1278, S1282, and S1284. Residues 1275–1288 (NHLSLSKSNSVSLV) show a composition bias toward low complexity. Residues 1275 to 1298 (NHLSLSKSNSVSLVPPGSSHTLPR) are disordered. The residue at position 1295 (T1295) is a Phosphothreonine. 2 positions are modified to phosphoserine: S1302 and S1313. Residue T1332 is modified to Phosphothreonine. S1346 and S1353 each carry phosphoserine. Position 1376 is a phosphothreonine (T1376). S1385 is subject to Phosphoserine. Y1386 bears the Phosphotyrosine mark. A phosphoserine mark is found at S1388, S1396, and S1411. Zn(2+)-binding residues include H1515, C1520, and C1523. Phosphoserine occurs at positions 1571, 1574, 1577, and 1591. C1651 lines the Zn(2+) pocket. A Phosphothreonine; by GSK3-alpha and GSK3-beta modification is found at T1695.

This sequence belongs to the RICTOR family. Component of the mechanistic target of rapamycin complex 2 (mTORC2), consisting in two heterotretramers composed of MTOR, MLST8, RICTOR and MAPKAP1/SIN1. The mTORC2 core complex associates with PRR5/PROTOR1 and/or PRR5L/PROTOR2. Contrary to mTORC1, mTORC2 does not bind to and is not sensitive to FKBP12-rapamycin. Binds directly to MTOR and PRR5 within the TORC2 complex; interaction with MTOR is enhanced by deubiquitination of RICTOR by USP9X. Interaction with MAPKAP1 is not enhanced by RICTOR deubiquitination by USP9X. Interacts with CCDC28B. Interacts with NBN. Interacts with SIK3. Interacts with NCKAP1L. Interacts with kinases GSK3A and GSK3B; the interactions lead to phosphorylation of RICTOR at Thr-1695 which facilitates its FBXW7-mediated ubiquitination and subsequent degradation. Interacts with FBXW7; the interaction is enhanced by GSK3-mediated phosphorylation of Thr-1695 and results in RICTOR ubiquitination and degradation. Interacts with ARMH4 (via cytoplasmic tail); this interaction bridges ARMH4 to the mTORC2 complex and inhibits the mTORC2 kinase activity. Interacts with UBXN2A. Interacts with TSPAN8. As to quaternary structure, (Microbial infection) Interacts with vaccinia virus protein F17; this interaction dysregulates MTOR. Phosphorylated by MTOR; when part of mTORC2. Phosphorylated at Thr-1135 by RPS6KB1 downstream of the mTORC1 complex: phosphorylation of RICTOR inhibits mTORC2 signaling by creating a binding site for 14-3-3 proteins. Phosphorylated at Thr-1695 by GSK3A and GSK3B which facilitates RICTOR ubiquitination and subsequent degradation. Phosphorylated at Ser-1235 by GSK3B in response to endoplasmic stress, inhibiting mTORC2 signaling. In terms of processing, ubiquitinated by the SCF(FBXW7) complex, leading to its degradation by the proteasome. Deubiquitinated by USP9X; deubiquitination stabilizes RICTOR and enhances its binding to MTOR, thus promoting mTORC2 complex assembly. Post-translationally, acetylated by EP300/p300 in response to glucose, leading to activate the mTORC2 complex. Acetylation by BLOC1S1/GCN5L1 in response to hypotoxic stress protects RICTOR against ubiquitination and subsequent degradation by the proteasome.

Its subcellular location is the cell membrane. The protein localises to the endoplasmic reticulum membrane. It localises to the lysosome membrane. In terms of biological role, component of the mechanistic target of rapamycin complex 2 (mTORC2), which transduces signals from growth factors to pathways involved in proliferation, cytoskeletal organization, lipogenesis and anabolic output. In response to growth factors, mTORC2 phosphorylates and activates AGC protein kinase family members, including AKT (AKT1, AKT2 and AKT3), PKC (PRKCA, PRKCB and PRKCE) and SGK1. In contrast to mTORC1, mTORC2 is nutrient-insensitive. Within the mTORC2 complex, RICTOR probably acts as a molecular adapter. RICTOR is responsible for the FKBP12-rapamycin-insensitivity of mTORC2. mTORC2 plays a critical role in AKT1 activation by mediating phosphorylation of different sites depending on the context, such as 'Thr-450', 'Ser-473', 'Ser-477' or 'Thr-479', facilitating the phosphorylation of the activation loop of AKT1 on 'Thr-308' by PDPK1/PDK1 which is a prerequisite for full activation. mTORC2 catalyzes the phosphorylation of SGK1 at 'Ser-422' and of PRKCA on 'Ser-657'. The mTORC2 complex also phosphorylates various proteins involved in insulin signaling, such as FBXW8 and IGF2BP1. mTORC2 acts upstream of Rho GTPases to regulate the actin cytoskeleton, probably by activating one or more Rho-type guanine nucleotide exchange factors. mTORC2 promotes the serum-induced formation of stress-fibers or F-actin. The chain is Rapamycin-insensitive companion of mTOR from Homo sapiens (Human).